Here is a 584-residue protein sequence, read N- to C-terminus: MNTLLSVLANLFQQATANAFPDLSVLDPNFQPEITPSTQEKFGHYQFNSAMKLAKLLKKNPRQVAEAIVNQLTDSLPPLSKIEIAGPGFINMTFSTDFLSKNLDILLRDAHFGIPFPEKPEKIIIDFSSPNVAKEMHVGHLRSTVIGDSLARLFEFLGHHVIRLNHLGDWGTAFGMLIAYMKEEAPNVLSGEQKTDLTHLVSWYRSSKKKFDEEPEFKRRAQLEVVALQQGEQKAREAWQMICEISQKAYQEIYQLLDVKIIDRGESFYNPFLPNIVSDLEKKGLVKISDGAKCIFLEGFQNREGENLPLMIQKSDGGYNYDTTDMAAIYHRIYHEKGDRLIYITDAGQATHFQMIFKAAEKAKYLDTTQIRVDHVPFGLVLGTDGKKFRTRSGETEKLIDLLRTAINCADKILSEKNPEMEESERRHLAKSLGIGAIKYADLSCNRVGDYTFSYDRMLRFEGNTAAFLMYAYVRIAGIKRRLKANLPAVLENTHINLEHSTEIELGLHILRFHETLNLMANDLLPNRLTDYLYTLAEKFNAFFRDCRVEGTPQQNTRLLLCEATAKVLKQGLTILGLTTVDKM.

Positions 130–140 (PNVAKEMHVGH) match the 'HIGH' region motif.

Belongs to the class-I aminoacyl-tRNA synthetase family. As to quaternary structure, monomer.

The protein resides in the cytoplasm. It catalyses the reaction tRNA(Arg) + L-arginine + ATP = L-arginyl-tRNA(Arg) + AMP + diphosphate. This Protochlamydia amoebophila (strain UWE25) protein is Arginine--tRNA ligase.